The chain runs to 207 residues: dTTP/UTP pyrophosphatase (207 aa).

The Proton acceptor role is filled by Asp-87.

The protein belongs to the Maf family. YhdE subfamily. Requires a divalent metal cation as cofactor.

The protein localises to the cytoplasm. It catalyses the reaction dTTP + H2O = dTMP + diphosphate + H(+). It carries out the reaction UTP + H2O = UMP + diphosphate + H(+). Nucleoside triphosphate pyrophosphatase that hydrolyzes dTTP and UTP. May have a dual role in cell division arrest and in preventing the incorporation of modified nucleotides into cellular nucleic acids. This Bordetella bronchiseptica (strain ATCC BAA-588 / NCTC 13252 / RB50) (Alcaligenes bronchisepticus) protein is dTTP/UTP pyrophosphatase.